Consider the following 206-residue polypeptide: Two-component response regulator ORR7 (206 aa).

A disordered region spans residues 53 to 92 (VVPLHDNASAEDDDDDEEDDDEDDDDDDDEDDEEEAAPPY). Residues 61–88 (SAEDDDDDEEDDDEDDDDDDDEDDEEEA) show a composition bias toward acidic residues. Positions 92-205 (YVMAVDDSSV…DISRITSRML (114 aa)) constitute a Response regulatory domain. Aspartate 138 carries the post-translational modification 4-aspartylphosphate.

Belongs to the ARR family. Type-A subfamily. In terms of processing, two-component system major event consists of a His-to-Asp phosphorelay between a sensor histidine kinase (HK) and a response regulator (RR). In plants, the His-to-Asp phosphorelay involves an additional intermediate named Histidine-containing phosphotransfer protein (HPt). This multistep phosphorelay consists of a His-Asp-His-Asp sequential transfer of a phosphate group between first a His and an Asp of the HK protein, followed by the transfer to a conserved His of the HPt protein and finally the transfer to an Asp in the receiver domain of the RR protein. Expressed in flowers, and at low levels in roots, mature leaves and shoots.

Functions as a response regulator involved in His-to-Asp phosphorelay signal transduction system. Phosphorylation of the Asp residue in the receiver domain activates the ability of the protein to promote the transcription of target genes. Type-A response regulators seem to act as negative regulators of the cytokinin signaling. The polypeptide is Two-component response regulator ORR7 (Oryza sativa subsp. indica (Rice)).